The sequence spans 420 residues: UDP-N-acetylglucosamine 1-carboxyvinyltransferase (420 aa).

Residue 22–23 (KN) coordinates phosphoenolpyruvate. Arg93 contributes to the UDP-N-acetyl-alpha-D-glucosamine binding site. Cys117 (proton donor) is an active-site residue. A 2-(S-cysteinyl)pyruvic acid O-phosphothioketal modification is found at Cys117. The UDP-N-acetyl-alpha-D-glucosamine site is built by Asp307 and Ile329.

It belongs to the EPSP synthase family. MurA subfamily.

The protein localises to the cytoplasm. The enzyme catalyses phosphoenolpyruvate + UDP-N-acetyl-alpha-D-glucosamine = UDP-N-acetyl-3-O-(1-carboxyvinyl)-alpha-D-glucosamine + phosphate. It participates in cell wall biogenesis; peptidoglycan biosynthesis. Functionally, cell wall formation. Adds enolpyruvyl to UDP-N-acetylglucosamine. In Shewanella pealeana (strain ATCC 700345 / ANG-SQ1), this protein is UDP-N-acetylglucosamine 1-carboxyvinyltransferase.